Reading from the N-terminus, the 849-residue chain is Lysine-specific histone demethylase 1 homolog 1 (849 aa).

A disordered region spans residues 1 to 118 (MEEGSEAQPP…RRRRKKQFPG (118 aa)). Composition is skewed to low complexity over residues 34–67 (GQAA…AADA) and 89–103 (PTSS…VDDS). A compositionally biased stretch (basic residues) spans 106–115 (ARKRRRRKKQ). One can recognise an SWIRM domain in the interval 159–260 (ARELDAEALI…FGLAPSVISL (102 aa)). The FAD site is built by E300, R302, R308, and E688.

This sequence belongs to the flavin monoamine oxidase family. Requires FAD as cofactor.

Functionally, probable histone demethylase. The polypeptide is Lysine-specific histone demethylase 1 homolog 1 (Oryza sativa subsp. japonica (Rice)).